The primary structure comprises 116 residues: Nitrogenase-stabilizing/protective protein NifW (116 aa).

Belongs to the NifW family. As to quaternary structure, homotrimer; associates with NifD.

Its function is as follows. May protect the nitrogenase Fe-Mo protein from oxidative damage. The polypeptide is Nitrogenase-stabilizing/protective protein NifW (Rhodopseudomonas palustris (strain ATCC BAA-98 / CGA009)).